The sequence spans 78 residues: D-alanyl carrier protein (78 aa).

Residues 1 to 77 (MAVKEEVVEI…KVIAKVESLI (77 aa)) enclose the Carrier domain. Ser-35 is modified (O-(pantetheine 4'-phosphoryl)serine).

Belongs to the DltC family. In terms of processing, 4'-phosphopantetheine is transferred from CoA to a specific serine of apo-DCP.

It localises to the cytoplasm. It participates in cell wall biogenesis; lipoteichoic acid biosynthesis. Carrier protein involved in the D-alanylation of lipoteichoic acid (LTA). The loading of thioester-linked D-alanine onto DltC is catalyzed by D-alanine--D-alanyl carrier protein ligase DltA. The DltC-carried D-alanyl group is further transferred to cell membrane phosphatidylglycerol (PG) by forming an ester bond, probably catalyzed by DltD. D-alanylation of LTA plays an important role in modulating the properties of the cell wall in Gram-positive bacteria, influencing the net charge of the cell wall. The polypeptide is D-alanyl carrier protein (Leuconostoc citreum (strain KM20)).